The sequence spans 254 residues: Proteasome subunit alpha (254 aa).

The tract at residues 231–254 (ESGAASADGEAETEAETDSGSDEE) is disordered. Positions 239–254 (GEAETEAETDSGSDEE) are enriched in acidic residues.

This sequence belongs to the peptidase T1A family. In terms of assembly, the 20S proteasome core is composed of 14 alpha and 14 beta subunits that assemble into four stacked heptameric rings, resulting in a barrel-shaped structure. The two inner rings, each composed of seven catalytic beta subunits, are sandwiched by two outer rings, each composed of seven alpha subunits. The catalytic chamber with the active sites is on the inside of the barrel. Has probably a gated structure, the ends of the cylinder being occluded by the N-termini of the alpha-subunits. Is likely capped by the proteasome-associated ATPase, ARC. The N-terminus is blocked.

Its subcellular location is the cytoplasm. The protein operates within protein degradation; proteasomal Pup-dependent pathway. With respect to regulation, the formation of the proteasomal ATPase ARC-20S proteasome complex, likely via the docking of the C-termini of ARC into the intersubunit pockets in the alpha-rings, may trigger opening of the gate for substrate entry. Interconversion between the open-gate and close-gate conformations leads to a dynamic regulation of the 20S proteasome proteolysis activity. Peptidolytic activity is completely inhibited by lactacystin, and to a lesser extent, by N-acetyl-Leu-Leu-norleucinal (Ac-LLnL) and benzoyloxycarbonyl-Leu-Leu-Leu-vinylsulfone (Z-LLL-VS) in vitro. Component of the proteasome core, a large protease complex with broad specificity involved in protein degradation. The S.coelicolor proteasome is able to cleave oligopeptides after hydrophobic residues, but not after basic or acidic residues, thus displaying chymotrypsin-like activity but not trypsin-like activity. The polypeptide is Proteasome subunit alpha (Streptomyces coelicolor (strain ATCC BAA-471 / A3(2) / M145)).